We begin with the raw amino-acid sequence, 487 residues long: 2-aminomuconic semialdehyde dehydrogenase (487 aa).

231-236 (GSTATA) provides a ligand contact to NAD(+). The Proton acceptor role is filled by glutamate 253. The active-site Nucleophile is cysteine 287.

This sequence belongs to the aldehyde dehydrogenase family.

Its subcellular location is the cytoplasm. The enzyme catalyses 2-aminomuconate 6-semialdehyde + NAD(+) + H2O = (2Z,4E)-2-aminomuconate + NADH + 2 H(+). Its pathway is amino-acid degradation; L-kynurenine degradation. Its function is as follows. Catalyzes the NAD-dependent oxidation of 2-aminomuconic semialdehyde of the kynurenine metabolic pathway in L-tryptophan degradation. In Danio rerio (Zebrafish), this protein is 2-aminomuconic semialdehyde dehydrogenase (aldh8a1).